Here is a 594-residue protein sequence, read N- to C-terminus: F-box/LRR-repeat protein At3g58980 (594 aa).

The F-box domain occupies M1–S49. LRR repeat units follow at residues I103–C125, L128–L151, P152–K174, S203–E218, C219–D242, L249–D272, L288–V314, F315–F339, C344–C369, L403–L414, H415–C437, L450–K474, S503–E518, H519–P541, and L584–M594.

The polypeptide is F-box/LRR-repeat protein At3g58980 (Arabidopsis thaliana (Mouse-ear cress)).